Consider the following 297-residue polypeptide: MSNWLVDKLIPSIMRSEVKKSSVPEGLWHKCPSCEAVLYRPELEKTLDVCPKCNHHMRIGARARIDIFLDAEGRAELGADLEPVDRLKFRDGKKYKDRLTGAQKQTGEKDALISMSGTLMGMPIVVSAFEFSFMGGSMGAIVGERFVRAANYALEHRCPMVCFSASGGARMQEALISLMQMAKTSAVLARLREEGIPFISVLTDPVYGGVSASLAMLGDVIVGEPKALIGFAGPRVIEQTVREKLPEGFQRSEFLLEHGAIDLIISRGELRPRLARLLAQMTGQDTPEQAREAAAVA.

A CoA carboxyltransferase N-terminal domain is found at 27 to 296 (LWHKCPSCEA…PEQAREAAAV (270 aa)). Cysteine 31, cysteine 34, cysteine 50, and cysteine 53 together coordinate Zn(2+). The segment at 31 to 53 (CPSCEAVLYRPELEKTLDVCPKC) adopts a C4-type zinc-finger fold.

Belongs to the AccD/PCCB family. In terms of assembly, acetyl-CoA carboxylase is a heterohexamer composed of biotin carboxyl carrier protein (AccB), biotin carboxylase (AccC) and two subunits each of ACCase subunit alpha (AccA) and ACCase subunit beta (AccD). Zn(2+) serves as cofactor.

It is found in the cytoplasm. The enzyme catalyses N(6)-carboxybiotinyl-L-lysyl-[protein] + acetyl-CoA = N(6)-biotinyl-L-lysyl-[protein] + malonyl-CoA. It functions in the pathway lipid metabolism; malonyl-CoA biosynthesis; malonyl-CoA from acetyl-CoA: step 1/1. Functionally, component of the acetyl coenzyme A carboxylase (ACC) complex. Biotin carboxylase (BC) catalyzes the carboxylation of biotin on its carrier protein (BCCP) and then the CO(2) group is transferred by the transcarboxylase to acetyl-CoA to form malonyl-CoA. This is Acetyl-coenzyme A carboxylase carboxyl transferase subunit beta from Pseudomonas putida (strain GB-1).